A 544-amino-acid chain; its full sequence is Glucans biosynthesis protein G 1 (544 aa).

The signal sequence occupies residues 1–33 (MVSLLRCQSFKPSSIICSLALSAAFALSGTAFA). Positions 36 to 58 (SKPAENKPATPVVSPPKATAPSA) are disordered.

Belongs to the OpgD/OpgG family.

The protein resides in the periplasm. It functions in the pathway glycan metabolism; osmoregulated periplasmic glucan (OPG) biosynthesis. Involved in the biosynthesis of osmoregulated periplasmic glucans (OPGs). This Shewanella oneidensis (strain ATCC 700550 / JCM 31522 / CIP 106686 / LMG 19005 / NCIMB 14063 / MR-1) protein is Glucans biosynthesis protein G 1 (opgG1).